The following is a 274-amino-acid chain: MAIKKFKPTSPGRRFVTVSDFEEITRTEPEKSLVEPLKKSGGRNAQGRITVRHRGGGHKRLYRIIDFKRDKDGIPAKVASIEYDPNRSARIALLHYADGEKRYIIAPAGLEVGQTVVSGPDADIKAGNCLPLKNIPVGTMIHNIELYPNGGGKLVRSAGASAQLMAKEGKYANIRMPSGEMRLLLQECRATIGQVGNVEHENITIGKAGRKRWLGIRPTVRGVVMNPVDHPHGGGEGRSPIGRNPVTPWGKPALGARTRKKKPGDRLIVKRRAR.

Residues 224 to 274 (VMNPVDHPHGGGEGRSPIGRNPVTPWGKPALGARTRKKKPGDRLIVKRRAR) form a disordered region. Basic residues predominate over residues 257–274 (RTRKKKPGDRLIVKRRAR).

Belongs to the universal ribosomal protein uL2 family. As to quaternary structure, part of the 50S ribosomal subunit. Forms a bridge to the 30S subunit in the 70S ribosome.

Its function is as follows. One of the primary rRNA binding proteins. Required for association of the 30S and 50S subunits to form the 70S ribosome, for tRNA binding and peptide bond formation. It has been suggested to have peptidyltransferase activity; this is somewhat controversial. Makes several contacts with the 16S rRNA in the 70S ribosome. The chain is Large ribosomal subunit protein uL2 from Pelotomaculum thermopropionicum (strain DSM 13744 / JCM 10971 / SI).